Consider the following 201-residue polypeptide: 3-isopropylmalate dehydratase small subunit (201 aa).

Belongs to the LeuD family. LeuD type 1 subfamily. In terms of assembly, heterodimer of LeuC and LeuD.

It carries out the reaction (2R,3S)-3-isopropylmalate = (2S)-2-isopropylmalate. The protein operates within amino-acid biosynthesis; L-leucine biosynthesis; L-leucine from 3-methyl-2-oxobutanoate: step 2/4. Catalyzes the isomerization between 2-isopropylmalate and 3-isopropylmalate, via the formation of 2-isopropylmaleate. The chain is 3-isopropylmalate dehydratase small subunit from Parvibaculum lavamentivorans (strain DS-1 / DSM 13023 / NCIMB 13966).